The chain runs to 132 residues: Large ribosomal subunit protein bL12 (132 aa).

Residues 112 to 132 (KEAADKAKTQLEGAGGTINLK) are disordered.

Belongs to the bacterial ribosomal protein bL12 family. In terms of assembly, homodimer. Part of the ribosomal stalk of the 50S ribosomal subunit. Forms a multimeric L10(L12)X complex, where L10 forms an elongated spine to which 2 to 4 L12 dimers bind in a sequential fashion. Binds GTP-bound translation factors.

In terms of biological role, forms part of the ribosomal stalk which helps the ribosome interact with GTP-bound translation factors. Is thus essential for accurate translation. This chain is Large ribosomal subunit protein bL12, found in Leifsonia xyli subsp. xyli (strain CTCB07).